A 265-amino-acid polypeptide reads, in one-letter code: Hydroxyethylthiazole kinase (265 aa).

Position 43 (Met-43) interacts with substrate. Residues Lys-118 and Thr-165 each contribute to the ATP site. Gly-192 serves as a coordination point for substrate.

It belongs to the Thz kinase family. Mg(2+) is required as a cofactor.

It carries out the reaction 5-(2-hydroxyethyl)-4-methylthiazole + ATP = 4-methyl-5-(2-phosphooxyethyl)-thiazole + ADP + H(+). It participates in cofactor biosynthesis; thiamine diphosphate biosynthesis; 4-methyl-5-(2-phosphoethyl)-thiazole from 5-(2-hydroxyethyl)-4-methylthiazole: step 1/1. Catalyzes the phosphorylation of the hydroxyl group of 4-methyl-5-beta-hydroxyethylthiazole (THZ). This is Hydroxyethylthiazole kinase from Pyrococcus horikoshii (strain ATCC 700860 / DSM 12428 / JCM 9974 / NBRC 100139 / OT-3).